The primary structure comprises 997 residues: Mannuronan C5-epimerase AlgE5 (997 aa).

PbH1 repeat units follow at residues 133–155, 157–179, 180–202, 204–226, 257–279, 280–315, and 320–359; these read DRDV…DPHE, TINL…VADF, QIGG…NIVT, TNDF…VIQR, AHDV…RVYG, AEDV…GVSG, and TTGT…SVSN. Hemolysin-type calcium-binding repeat units follow at residues 388–403, 406–422, 424–439, 557–573, 574–590, 695–709, 712–729, 828–839, 846–862, and 864–880; these read GTTG…AHET, GLDG…NDIL, GGAG…GADL, GHAG…DDIL, VGGA…GADL, GSAG…AADE, HGGA…ADVF, GSDGNDTLDGGS, GGAG…NDIL, and GGAG…SDIF.

This sequence belongs to the D-mannuronate C5-epimerase family. It depends on Ca(2+) as a cofactor.

Its subcellular location is the secreted. The enzyme catalyses [(1-&gt;4)-beta-D-mannuronosyl](n) = [alginate](n). It participates in glycan biosynthesis; alginate biosynthesis. Inhibited by zinc. Its function is as follows. Converts beta-D-mannuronic acid (M) to alpha-L-guluronic acid (G), producing a polymer with gel-forming capacity, required for the formation of the cyst coat. The protein is Mannuronan C5-epimerase AlgE5 of Azotobacter vinelandii.